We begin with the raw amino-acid sequence, 1024 residues long: Integrator complex subunit 7 homolog (1024 aa).

Polar residues-rich tracts occupy residues 1-11 (MSKYKNSSLLN) and 19-36 (PSLS…QLPP). 3 disordered regions span residues 1-109 (MSKY…PTNS), 472-502 (DNNN…NNNN), and 842-863 (NNNN…NNNN). 3 stretches are compositionally biased toward low complexity: residues 44 to 77 (STNN…NNTV), 85 to 96 (TAGSSTSSASSV), and 473 to 502 (NNNN…NNNN).

Belongs to the Integrator subunit 7 family. As to quaternary structure, component of the Integrator complex. The core complex associates with protein phosphatase 2A subunits, to form the Integrator-PP2A (INTAC) complex.

It is found in the nucleus. Its subcellular location is the chromosome. It localises to the cytoplasm. Component of the integrator complex, a multiprotein complex that terminates RNA polymerase II (Pol II) transcription in the promoter-proximal region of genes. The integrator complex provides a quality checkpoint during transcription elongation by driving premature transcription termination of transcripts that are unfavorably configured for transcriptional elongation: the complex terminates transcription by (1) catalyzing dephosphorylation of the C-terminal domain (CTD) of Pol II subunit polr2a, (2) degrading the exiting nascent RNA transcript via endonuclease activity and (3) promoting the release of Pol II from bound DNA. The integrator complex is also involved in terminating the synthesis of non-coding Pol II transcripts, such as enhancer RNAs (eRNAs), small nuclear RNAs (snRNAs), telomerase RNAs and long non-coding RNAs (lncRNAs). In Dictyostelium discoideum (Social amoeba), this protein is Integrator complex subunit 7 homolog (ints7).